The primary structure comprises 253 residues: uncharacterized protein (253 aa).

Residues 175-184 (NPTQTSPGKP) show a composition bias toward polar residues. Residues 175-253 (NPTQTSPGKP…ATENEDRLPS (79 aa)) form a disordered region. S180 bears the Phosphoserine mark. Composition is skewed to low complexity over residues 185–196 (STSESSQTDTST) and 203–214 (TPTTTRASSYTT). Residues 215–242 (LVSTSNQVSNEAEASAVETSANQAQNTE) are compositionally biased toward polar residues.

It belongs to the TRAPP small subunits family. BET3 subfamily.

This is an uncharacterized protein from Schizosaccharomyces pombe (strain 972 / ATCC 24843) (Fission yeast).